A 342-amino-acid polypeptide reads, in one-letter code: uncharacterized protein (342 aa).

Belongs to the bacterial luciferase oxidoreductase family.

This is an uncharacterized protein from Sinorhizobium fredii (strain NBRC 101917 / NGR234).